Here is a 111-residue protein sequence, read N- to C-terminus: Ribonuclease P protein component (111 aa).

It belongs to the RnpA family. Consists of a catalytic RNA component (M1 or rnpB) and a protein subunit.

It catalyses the reaction Endonucleolytic cleavage of RNA, removing 5'-extranucleotides from tRNA precursor.. RNaseP catalyzes the removal of the 5'-leader sequence from pre-tRNA to produce the mature 5'-terminus. It can also cleave other RNA substrates such as 4.5S RNA. The protein component plays an auxiliary but essential role in vivo by binding to the 5'-leader sequence and broadening the substrate specificity of the ribozyme. This chain is Ribonuclease P protein component, found in Mycoplasmopsis pulmonis (strain UAB CTIP) (Mycoplasma pulmonis).